Here is a 117-residue protein sequence, read N- to C-terminus: Large ribosomal subunit protein bL20 (117 aa).

The protein belongs to the bacterial ribosomal protein bL20 family.

Functionally, binds directly to 23S ribosomal RNA and is necessary for the in vitro assembly process of the 50S ribosomal subunit. It is not involved in the protein synthesizing functions of that subunit. In Rickettsia peacockii (strain Rustic), this protein is Large ribosomal subunit protein bL20.